Consider the following 199-residue polypeptide: Guanylate kinase (199 aa).

Residues 20–198 form the Guanylate kinase-like domain; that stretch reads GKLIVLTGPS…ALQAIEVALF (179 aa). 27–34 contacts ATP; it reads GPSGVGKG.

It belongs to the guanylate kinase family.

It is found in the cytoplasm. The catalysed reaction is GMP + ATP = GDP + ADP. Functionally, essential for recycling GMP and indirectly, cGMP. This is Guanylate kinase from Trichormus variabilis (strain ATCC 29413 / PCC 7937) (Anabaena variabilis).